The chain runs to 185 residues: Male-enhanced antigen 1 (185 aa).

Disordered stretches follow at residues 1–90 (MGPE…VGDG) and 104–134 (GLHL…IPMD). Acidic residues-rich tracts occupy residues 50 to 60 (SSEEPEEEQEE) and 112 to 121 (LESEDEDEEG). At Ser114 the chain carries Phosphoserine.

In terms of tissue distribution, highly expressed in testis.

Functionally, may play an important role in spermatogenesis and/or testis development. The polypeptide is Male-enhanced antigen 1 (MEA1) (Homo sapiens (Human)).